The sequence spans 134 residues: Complexin-1 (134 aa).

The disordered stretch occupies residues 1–112 (MEFVMKQALG…PGCGDAAEEE (112 aa)). A compositionally biased stretch (basic and acidic residues) spans 15–81 (DMGKMLGGDE…IKKKEEREAE (67 aa)). A coiled-coil region spans residues 29–69 (DAAKKEEERQEALRQEEEERKAKYAKMEAEREAVRQGIRDK). An interaction with the SNARE complex region spans residues 48 to 70 (RKAKYAKMEAEREAVRQGIRDKY).

Belongs to the complexin/synaphin family. In terms of assembly, binds to the SNARE core complex containing SNAP25, VAMP2 and STX1A.

It is found in the cytoplasm. The protein resides in the cytosol. Its subcellular location is the perikaryon. It localises to the presynapse. In terms of biological role, positively regulates a late step in synaptic vesicle exocytosis. Organizes the SNAREs into a cross-linked zigzag topology that, when interposed between the vesicle and plasma membranes, is incompatible with fusion, thereby preventing SNAREs from releasing neurotransmitters until an action potential arrives at the synapse. Also involved in glucose-induced secretion of insulin by pancreatic beta-cells. This is Complexin-1 (CPLX1) from Bos taurus (Bovine).